The primary structure comprises 376 residues: Chaperone protein DnaJ (376 aa).

A J domain is found at 5-69; sequence DYYEVLGISK…QKRAQYDQYG (65 aa). Residues 133–215 form a CR-type zinc finger; it reads GKDAEIEIPR…CHGKGRVTKT (83 aa). Residues Cys-146, Cys-149, Cys-163, Cys-166, Cys-189, Cys-192, Cys-203, and Cys-206 each contribute to the Zn(2+) site. 4 CXXCXGXG motif repeats span residues 146 to 153, 163 to 170, 189 to 196, and 203 to 210; these read CDTCHGSG, CSHCGGKG, CQYCNGTG, and CSTCHGKG.

Belongs to the DnaJ family. Homodimer. The cofactor is Zn(2+).

The protein resides in the cytoplasm. Functionally, participates actively in the response to hyperosmotic and heat shock by preventing the aggregation of stress-denatured proteins and by disaggregating proteins, also in an autonomous, DnaK-independent fashion. Unfolded proteins bind initially to DnaJ; upon interaction with the DnaJ-bound protein, DnaK hydrolyzes its bound ATP, resulting in the formation of a stable complex. GrpE releases ADP from DnaK; ATP binding to DnaK triggers the release of the substrate protein, thus completing the reaction cycle. Several rounds of ATP-dependent interactions between DnaJ, DnaK and GrpE are required for fully efficient folding. Also involved, together with DnaK and GrpE, in the DNA replication of plasmids through activation of initiation proteins. This chain is Chaperone protein DnaJ, found in Listeria welshimeri serovar 6b (strain ATCC 35897 / DSM 20650 / CCUG 15529 / CIP 8149 / NCTC 11857 / SLCC 5334 / V8).